Reading from the N-terminus, the 398-residue chain is Bifunctional enzyme IspD/IspF (398 aa).

Residues 1–234 (MSNSKRTAAI…SRLGALLGDI (234 aa)) are 2-C-methyl-D-erythritol 4-phosphate cytidylyltransferase. Residues 235 to 398 (RTGTGYDVHA…LPWGTNGLAD (164 aa)) are 2-C-methyl-D-erythritol 2,4-cyclodiphosphate synthase. Residues Asp-241 and His-243 each coordinate a divalent metal cation. Residues 241-243 (DVH) and 267-268 (HS) each bind 4-CDP-2-C-methyl-D-erythritol 2-phosphate. Position 275 (His-275) interacts with a divalent metal cation. 4-CDP-2-C-methyl-D-erythritol 2-phosphate contacts are provided by residues 289–291 (DIG), 365–368 (TTSE), Phe-372, and Arg-375.

It in the N-terminal section; belongs to the IspD/TarI cytidylyltransferase family. IspD subfamily. In the C-terminal section; belongs to the IspF family. A divalent metal cation serves as cofactor.

It carries out the reaction 2-C-methyl-D-erythritol 4-phosphate + CTP + H(+) = 4-CDP-2-C-methyl-D-erythritol + diphosphate. The enzyme catalyses 4-CDP-2-C-methyl-D-erythritol 2-phosphate = 2-C-methyl-D-erythritol 2,4-cyclic diphosphate + CMP. It participates in isoprenoid biosynthesis; isopentenyl diphosphate biosynthesis via DXP pathway; isopentenyl diphosphate from 1-deoxy-D-xylulose 5-phosphate: step 2/6. It functions in the pathway isoprenoid biosynthesis; isopentenyl diphosphate biosynthesis via DXP pathway; isopentenyl diphosphate from 1-deoxy-D-xylulose 5-phosphate: step 4/6. Functionally, bifunctional enzyme that catalyzes the formation of 4-diphosphocytidyl-2-C-methyl-D-erythritol from CTP and 2-C-methyl-D-erythritol 4-phosphate (MEP) (IspD), and catalyzes the conversion of 4-diphosphocytidyl-2-C-methyl-D-erythritol 2-phosphate (CDP-ME2P) to 2-C-methyl-D-erythritol 2,4-cyclodiphosphate (ME-CPP) with a corresponding release of cytidine 5-monophosphate (CMP) (IspF). In Rhodopseudomonas palustris (strain BisB18), this protein is Bifunctional enzyme IspD/IspF.